The following is a 617-amino-acid chain: Dihydroxy-acid dehydratase (617 aa).

Position 81 (Asp-81) interacts with Mg(2+). Position 122 (Cys-122) interacts with [2Fe-2S] cluster. Mg(2+) is bound by residues Asp-123 and Lys-124. Lys-124 is subject to N6-carboxylysine. Cys-195 contacts [2Fe-2S] cluster. Glu-491 is a Mg(2+) binding site. Ser-517 functions as the Proton acceptor in the catalytic mechanism.

It belongs to the IlvD/Edd family. Homodimer. Requires [2Fe-2S] cluster as cofactor. Mg(2+) serves as cofactor.

The enzyme catalyses (2R)-2,3-dihydroxy-3-methylbutanoate = 3-methyl-2-oxobutanoate + H2O. It carries out the reaction (2R,3R)-2,3-dihydroxy-3-methylpentanoate = (S)-3-methyl-2-oxopentanoate + H2O. It participates in amino-acid biosynthesis; L-isoleucine biosynthesis; L-isoleucine from 2-oxobutanoate: step 3/4. It functions in the pathway amino-acid biosynthesis; L-valine biosynthesis; L-valine from pyruvate: step 3/4. In terms of biological role, functions in the biosynthesis of branched-chain amino acids. Catalyzes the dehydration of (2R,3R)-2,3-dihydroxy-3-methylpentanoate (2,3-dihydroxy-3-methylvalerate) into 2-oxo-3-methylpentanoate (2-oxo-3-methylvalerate) and of (2R)-2,3-dihydroxy-3-methylbutanoate (2,3-dihydroxyisovalerate) into 2-oxo-3-methylbutanoate (2-oxoisovalerate), the penultimate precursor to L-isoleucine and L-valine, respectively. The chain is Dihydroxy-acid dehydratase from Caulobacter vibrioides (strain ATCC 19089 / CIP 103742 / CB 15) (Caulobacter crescentus).